Reading from the N-terminus, the 994-residue chain is Alpha-mannosidase F (994 aa).

Residues 1–20 form the signal peptide; the sequence is MKNFYYFILILLFFNEVCYS. Residues His-35, Asp-37, and Asp-151 each coordinate Zn(2+). Asp-151 acts as the Nucleophile in catalysis. N-linked (GlcNAc...) asparagine glycosylation is found at Asn-247 and Asn-381. Residue His-392 coordinates Zn(2+). N-linked (GlcNAc...) asparagine glycosylation is found at Asn-554, Asn-712, and Asn-932.

It belongs to the glycosyl hydrolase 38 family. Requires Zn(2+) as cofactor.

It is found in the secreted. It carries out the reaction Hydrolysis of terminal, non-reducing alpha-D-mannose residues in alpha-D-mannosides.. The sequence is that of Alpha-mannosidase F (manF) from Dictyostelium discoideum (Social amoeba).